Reading from the N-terminus, the 248-residue chain is Exosome complex component Rrp41 (248 aa).

This sequence belongs to the RNase PH family. Rrp41 subfamily. As to quaternary structure, component of the archaeal exosome complex. Forms a hexameric ring-like arrangement composed of 3 Rrp41-Rrp42 heterodimers. The hexameric ring associates with a trimer of Rrp4 and/or Csl4 subunits.

It localises to the cytoplasm. Catalytic component of the exosome, which is a complex involved in RNA degradation. Has 3'-&gt;5' exoribonuclease activity. Can also synthesize heteromeric RNA-tails. The polypeptide is Exosome complex component Rrp41 (Thermoplasma volcanium (strain ATCC 51530 / DSM 4299 / JCM 9571 / NBRC 15438 / GSS1)).